Here is a 280-residue protein sequence, read N- to C-terminus: Mastin (280 aa).

The first 15 residues, 1-15 (MLWLLVLTAPWLGGS), serve as a signal peptide directing secretion. Positions 16-30 (VPISPDPGLRHEQVG) are excised as a propeptide. One can recognise a Peptidase S1 domain in the interval 31-275 (IVGGCKVPAR…YVSWIHQHIP (245 aa)). The cysteines at positions 62 and 78 are disulfide-linked. H77 acts as the Charge relay system in catalysis. N-linked (GlcNAc...) asparagine glycosylation is found at N106 and N117. D127 (charge relay system) is an active-site residue. 3 disulfides stabilise this stretch: C161–C234, C194–C215, and C224–C252. S228 serves as the catalytic Charge relay system.

Belongs to the peptidase S1 family. In terms of assembly, oligomer; disulfide-linked. In terms of processing, N-glycosylated. As to expression, mononuclear cells within skin, intestine, trachea and lung parenchyma, and polymorphonuclear leukocytes within capillaries and blood.

It is found in the cytoplasm. Inhibited by leupeptin and bis(5-amidino-2-benzimidazolyl)methane (BABIM). Its function is as follows. Trypsin-like serine protease. Has a preference for extended substrates with basic residues at the P1 position; Arg is preferred over Lys. Active towards calcitonin gene-related peptide and gelatin. Not active towards substance P, vasoactive intestinal peptide, type I collagen or azocasein. The polypeptide is Mastin (Canis lupus familiaris (Dog)).